The following is a 468-amino-acid chain: V-type proton ATPase subunit H (468 aa).

Belongs to the V-ATPase H subunit family. V-ATPase is a heteromultimeric enzyme made up of two complexes: the ATP-hydrolytic V1 complex and the proton translocation V0 complex. The V1 complex consists of three catalytic AB heterodimers that form a heterohexamer, three peripheral stalks each consisting of EG heterodimers, one central rotor including subunits D and F, and the regulatory subunits C and H. The proton translocation complex V0 consists of the proton transport subunit a, a ring of proteolipid subunits c9c'', rotary subunit d, subunits e and f, and the accessory subunits VhaAC45 and ATP6AP2.

Subunit of the V1 complex of vacuolar(H+)-ATPase (V-ATPase), a multisubunit enzyme composed of a peripheral complex (V1) that hydrolyzes ATP and a membrane integral complex (V0) that translocates protons. V-ATPase is responsible for acidifying and maintaining the pH of intracellular compartments and in some cell types, is targeted to the plasma membrane, where it is responsible for acidifying the extracellular environment. Subunit H is essential for V-ATPase activity, but not for the assembly of the complex. This is V-type proton ATPase subunit H (VhaSFD) from Drosophila melanogaster (Fruit fly).